Reading from the N-terminus, the 113-residue chain is Hydrogenase maturation factor HypA (113 aa).

Ni(2+) is bound at residue His2. Residues Cys73, Cys76, Cys89, and Cys92 each contribute to the Zn(2+) site.

It belongs to the HypA/HybF family.

In terms of biological role, involved in the maturation of [NiFe] hydrogenases. Required for nickel insertion into the metal center of the hydrogenase. This Xanthobacter autotrophicus (strain ATCC BAA-1158 / Py2) protein is Hydrogenase maturation factor HypA.